We begin with the raw amino-acid sequence, 157 residues long: Ribosomal RNA large subunit methyltransferase H (157 aa).

Residues Leu-74, Gly-106, and 125–130 (LSDMTL) each bind S-adenosyl-L-methionine.

The protein belongs to the RNA methyltransferase RlmH family. Homodimer.

The protein localises to the cytoplasm. The enzyme catalyses pseudouridine(1915) in 23S rRNA + S-adenosyl-L-methionine = N(3)-methylpseudouridine(1915) in 23S rRNA + S-adenosyl-L-homocysteine + H(+). Functionally, specifically methylates the pseudouridine at position 1915 (m3Psi1915) in 23S rRNA. The sequence is that of Ribosomal RNA large subunit methyltransferase H from Desulfovibrio desulfuricans (strain ATCC 27774 / DSM 6949 / MB).